The sequence spans 66 residues: Large ribosomal subunit protein uL29 (66 aa).

Belongs to the universal ribosomal protein uL29 family.

The protein is Large ribosomal subunit protein uL29 of Deinococcus deserti (strain DSM 17065 / CIP 109153 / LMG 22923 / VCD115).